Consider the following 325-residue polypeptide: Phospho-N-acetylmuramoyl-pentapeptide-transferase (325 aa).

The next 10 membrane-spanning stretches (helical) occupy residues Leu-3–Ile-23, Gly-48–Val-68, Ala-79–Ile-99, Leu-106–Ala-126, Ile-136–Ile-156, Gly-174–Thr-194, Leu-199–Tyr-219, Val-223–Met-243, Leu-246–Leu-266, and Ile-298–Ile-318.

The protein belongs to the glycosyltransferase 4 family. MraY subfamily. Requires Mg(2+) as cofactor.

The protein localises to the cell membrane. It catalyses the reaction UDP-N-acetyl-alpha-D-muramoyl-L-alanyl-gamma-D-glutamyl-meso-2,6-diaminopimeloyl-D-alanyl-D-alanine + di-trans,octa-cis-undecaprenyl phosphate = di-trans,octa-cis-undecaprenyl diphospho-N-acetyl-alpha-D-muramoyl-L-alanyl-D-glutamyl-meso-2,6-diaminopimeloyl-D-alanyl-D-alanine + UMP. It participates in cell wall biogenesis; peptidoglycan biosynthesis. Catalyzes the initial step of the lipid cycle reactions in the biosynthesis of the cell wall peptidoglycan: transfers peptidoglycan precursor phospho-MurNAc-pentapeptide from UDP-MurNAc-pentapeptide onto the lipid carrier undecaprenyl phosphate, yielding undecaprenyl-pyrophosphoryl-MurNAc-pentapeptide, known as lipid I. The sequence is that of Phospho-N-acetylmuramoyl-pentapeptide-transferase from Clostridium novyi (strain NT).